A 483-amino-acid polypeptide reads, in one-letter code: Probable glycine dehydrogenase (decarboxylating) subunit 2 (483 aa).

Lys-267 carries the N6-(pyridoxal phosphate)lysine modification.

Belongs to the GcvP family. C-terminal subunit subfamily. The glycine cleavage system is composed of four proteins: P, T, L and H. In this organism, the P 'protein' is a heterodimer of two subunits. It depends on pyridoxal 5'-phosphate as a cofactor.

The catalysed reaction is N(6)-[(R)-lipoyl]-L-lysyl-[glycine-cleavage complex H protein] + glycine + H(+) = N(6)-[(R)-S(8)-aminomethyldihydrolipoyl]-L-lysyl-[glycine-cleavage complex H protein] + CO2. In terms of biological role, the glycine cleavage system catalyzes the degradation of glycine. The P protein binds the alpha-amino group of glycine through its pyridoxal phosphate cofactor; CO(2) is released and the remaining methylamine moiety is then transferred to the lipoamide cofactor of the H protein. The sequence is that of Probable glycine dehydrogenase (decarboxylating) subunit 2 from Kosmotoga olearia (strain ATCC BAA-1733 / DSM 21960 / TBF 19.5.1).